Consider the following 253-residue polypeptide: Phosphoadenosine 5'-phosphosulfate reductase (253 aa).

Catalysis depends on Cys242, which acts as the Nucleophile; cysteine thiosulfonate intermediate.

This sequence belongs to the PAPS reductase family. CysH subfamily.

The protein localises to the cytoplasm. It carries out the reaction [thioredoxin]-disulfide + sulfite + adenosine 3',5'-bisphosphate + 2 H(+) = [thioredoxin]-dithiol + 3'-phosphoadenylyl sulfate. Its pathway is sulfur metabolism; hydrogen sulfide biosynthesis; sulfite from sulfate: step 3/3. In terms of biological role, catalyzes the formation of sulfite from phosphoadenosine 5'-phosphosulfate (PAPS) using thioredoxin as an electron donor. The chain is Phosphoadenosine 5'-phosphosulfate reductase from Vibrio cholerae serotype O1 (strain ATCC 39541 / Classical Ogawa 395 / O395).